The following is a 216-amino-acid chain: UPF0548 protein (216 aa).

It belongs to the UPF0548 family.

This Dictyostelium discoideum (Social amoeba) protein is UPF0548 protein.